The following is a 508-amino-acid chain: Photosystem II CP47 reaction center protein (508 aa).

Helical transmembrane passes span 21-36 (AVHL…WAGS), 101-115 (IILS…IWHW), 140-156 (GIHL…FGAF), 203-218 (IAAG…FHLS), 237-252 (VLSS…AFVV), and 457-472 (IFAL…HGAR).

Belongs to the PsbB/PsbC family. PsbB subfamily. As to quaternary structure, PSII is composed of 1 copy each of membrane proteins PsbA, PsbB, PsbC, PsbD, PsbE, PsbF, PsbH, PsbI, PsbJ, PsbK, PsbL, PsbM, PsbT, PsbY, PsbZ, Psb30/Ycf12, at least 3 peripheral proteins of the oxygen-evolving complex and a large number of cofactors. It forms dimeric complexes. The cofactor is Binds multiple chlorophylls. PSII binds additional chlorophylls, carotenoids and specific lipids..

The protein localises to the plastid. It localises to the chloroplast thylakoid membrane. Functionally, one of the components of the core complex of photosystem II (PSII). It binds chlorophyll and helps catalyze the primary light-induced photochemical processes of PSII. PSII is a light-driven water:plastoquinone oxidoreductase, using light energy to abstract electrons from H(2)O, generating O(2) and a proton gradient subsequently used for ATP formation. This Bigelowiella natans (Pedinomonas minutissima) protein is Photosystem II CP47 reaction center protein.